Here is a 155-residue protein sequence, read N- to C-terminus: D-aminoacyl-tRNA deacylase (155 aa).

Positions 137–138 (GP) match the Gly-cisPro motif, important for rejection of L-amino acids motif.

It belongs to the DTD family. As to quaternary structure, homodimer.

It is found in the cytoplasm. It carries out the reaction glycyl-tRNA(Ala) + H2O = tRNA(Ala) + glycine + H(+). It catalyses the reaction a D-aminoacyl-tRNA + H2O = a tRNA + a D-alpha-amino acid + H(+). Its function is as follows. An aminoacyl-tRNA editing enzyme that deacylates mischarged D-aminoacyl-tRNAs. Also deacylates mischarged glycyl-tRNA(Ala), protecting cells against glycine mischarging by AlaRS. Acts via tRNA-based rather than protein-based catalysis; rejects L-amino acids rather than detecting D-amino acids in the active site. By recycling D-aminoacyl-tRNA to D-amino acids and free tRNA molecules, this enzyme counteracts the toxicity associated with the formation of D-aminoacyl-tRNA entities in vivo and helps enforce protein L-homochirality. This is D-aminoacyl-tRNA deacylase from Geotalea uraniireducens (strain Rf4) (Geobacter uraniireducens).